The following is a 775-amino-acid chain: Cation channel sperm-associated protein subunit epsilon-like protein (775 aa).

A signal peptide spans 1-20; sequence MLARRVVAALLLWLSCCVSA. 2 N-linked (GlcNAc...) asparagine glycosylation sites follow: N62 and N114.

This sequence belongs to the CATSPERD family.

This is Cation channel sperm-associated protein subunit epsilon-like protein from Mus musculus (Mouse).